Reading from the N-terminus, the 148-residue chain is Large ribosomal subunit protein bL9 (148 aa).

This sequence belongs to the bacterial ribosomal protein bL9 family.

Its function is as follows. Binds to the 23S rRNA. In Lysinibacillus sphaericus (strain C3-41), this protein is Large ribosomal subunit protein bL9.